We begin with the raw amino-acid sequence, 75 residues long: Small ribosomal subunit protein bS18 (75 aa).

The protein belongs to the bacterial ribosomal protein bS18 family. In terms of assembly, part of the 30S ribosomal subunit. Forms a tight heterodimer with protein bS6.

Functionally, binds as a heterodimer with protein bS6 to the central domain of the 16S rRNA, where it helps stabilize the platform of the 30S subunit. The chain is Small ribosomal subunit protein bS18 from Aliivibrio fischeri (strain ATCC 700601 / ES114) (Vibrio fischeri).